Consider the following 221-residue polypeptide: Adenylate kinase (221 aa).

Residue 10–15 (GAGKGT) coordinates ATP. Residues 30-59 (STGDMLRAAVKAGTPLGLEAKRYMDAGELV) are NMP. AMP contacts are provided by residues T31, R36, 57-59 (ELV), 85-88 (GFPR), and Q92. Residues 122–159 (GRRMHPASGRTYHVKFNPPKVEGVDDVTGEPLIQRDDD) are LID. Residues R123 and 132–133 (TY) each bind ATP. The AMP site is built by R156 and R167. Position 207 (G207) interacts with ATP.

It belongs to the adenylate kinase family. In terms of assembly, monomer.

It is found in the cytoplasm. The enzyme catalyses AMP + ATP = 2 ADP. It participates in purine metabolism; AMP biosynthesis via salvage pathway; AMP from ADP: step 1/1. Functionally, catalyzes the reversible transfer of the terminal phosphate group between ATP and AMP. Plays an important role in cellular energy homeostasis and in adenine nucleotide metabolism. The sequence is that of Adenylate kinase from Paraburkholderia phymatum (strain DSM 17167 / CIP 108236 / LMG 21445 / STM815) (Burkholderia phymatum).